Consider the following 336-residue polypeptide: Isopentenyl-diphosphate delta-isomerase (336 aa).

5-6 (RK) serves as a coordination point for substrate. Residues 60–62 (AMT), Ser-90, and Asn-117 each bind FMN. Position 147 (Gln-147) interacts with substrate. Residue Glu-148 participates in Mg(2+) binding. Residues Lys-179, Ser-204, Thr-209, 253–255 (GVR), and 274–275 (SR) contribute to the FMN site.

Belongs to the IPP isomerase type 2 family. Homooctamer. Dimer of tetramers. Requires FMN as cofactor. It depends on NADPH as a cofactor. Mg(2+) is required as a cofactor.

It localises to the cytoplasm. It catalyses the reaction isopentenyl diphosphate = dimethylallyl diphosphate. Its function is as follows. Involved in the biosynthesis of isoprenoids. Catalyzes the 1,3-allylic rearrangement of the homoallylic substrate isopentenyl (IPP) to its allylic isomer, dimethylallyl diphosphate (DMAPP). In Streptococcus pneumoniae (strain ATCC BAA-255 / R6), this protein is Isopentenyl-diphosphate delta-isomerase.